The following is a 563-amino-acid chain: Protein disulfide isomerase-like 1-4 (563 aa).

Residues 1 to 22 (MRSRSLLLVALATLLLHASASA) form the signal peptide. A disordered region spans residues 40–64 (NDPDGWLQEGSPDDDDDDDLFHHGQ). The region spanning 46-180 (LQEGSPDDDD…IVSWVNKKLA (135 aa)) is the Thioredoxin 1 domain. Residue asparagine 82 is glycosylated (N-linked (GlcNAc...) asparagine). Active-site nucleophile residues include cysteine 102 and cysteine 105. Cysteine 102 and cysteine 105 are joined by a disulfide. N-linked (GlcNAc...) asparagine glycosylation is found at asparagine 185 and asparagine 315. The Thioredoxin 2 domain maps to 394 to 523 (FLEEKLTPFY…MYKFIKKHAS (130 aa)). Catalysis depends on nucleophile residues cysteine 444 and cysteine 447. Cysteine 444 and cysteine 447 are oxidised to a cystine. A compositionally biased stretch (basic and acidic residues) spans 529-542 (KRPDSSATKTEKDQ). Residues 529–563 (KRPDSSATKTEKDQSTASTNLRGERSSGTNFKDEL) form a disordered region. Positions 543-563 (STASTNLRGERSSGTNFKDEL) are enriched in polar residues. Positions 560–563 (KDEL) match the Prevents secretion from ER motif.

Belongs to the protein disulfide isomerase family.

It localises to the endoplasmic reticulum lumen. The enzyme catalyses Catalyzes the rearrangement of -S-S- bonds in proteins.. In terms of biological role, acts as a protein-folding catalyst that interacts with nascent polypeptides to catalyze the formation, isomerization, and reduction or oxidation of disulfide bonds. May play a role in storage protein biogenesis. The chain is Protein disulfide isomerase-like 1-4 (PDIL1-4) from Oryza sativa subsp. japonica (Rice).